Here is a 315-residue protein sequence, read N- to C-terminus: CRISPR-associated endonuclease Cas1 1 (315 aa).

Positions 144, 208, and 223 each coordinate Mn(2+).

The protein belongs to the CRISPR-associated endonuclease Cas1 family. As to quaternary structure, homodimer, forms a heterotetramer with a Cas2 homodimer. Requires Mg(2+) as cofactor. The cofactor is Mn(2+).

In terms of biological role, CRISPR (clustered regularly interspaced short palindromic repeat), is an adaptive immune system that provides protection against mobile genetic elements (viruses, transposable elements and conjugative plasmids). CRISPR clusters contain spacers, sequences complementary to antecedent mobile elements, and target invading nucleic acids. CRISPR clusters are transcribed and processed into CRISPR RNA (crRNA). Acts as a dsDNA endonuclease. Involved in the integration of spacer DNA into the CRISPR cassette. This is CRISPR-associated endonuclease Cas1 1 from Thermus thermophilus (strain ATCC 27634 / DSM 579 / HB8).